The primary structure comprises 456 residues: MTVSYNQSVATSRPWTFLALIFRWRGSVWSAIWIQYSVWLGLYFLVSAIYRFILSAYQQQIFVRLVDYVNSRMSYVPLDWMLGFFIAGVLRRFWYLYDIIGFIDNIACSTATYIRGDSERAKQYRRNIIRYCELTQVLIFRDLSMKARKRFPTLDTVAAAGFMMPHEKANFDLIQYNYNKYFLPFNWAWALVYNARKEGLIEGDYYVTVISEDIKKFRTGLAWVCNYDWVPLPIIYPTIVCLAVHMYFFVGILARQYVKGSEIDPDMIDLVFPFMTSIQFVFYMGWLKVGEGLLNPWGEDPDDFETNMLIDRNLAMGLKIVDEGYDKTPRLEKDAFWDDTWVPLYSEASAHEKRYHQRQGSLAHIKIGRSVSQVRMVPRDGRRASIVKERIVNVKPGSGIGDILRPSSLLNLMKHASSSRSLERQRSPGSFRMETLTPGSPTNTPIEPIDKIDKKK.

4 consecutive transmembrane segments (helical) span residues 29 to 49 (WSAIWIQYSVWLGLYFLVSAI), 83 to 103 (GFFIAGVLRRFWYLYDIIGFI), 234 to 254 (IIYPTIVCLAVHMYFFVGILA), and 267 to 287 (MIDLVFPFMTSIQFVFYMGWL). A disordered region spans residues 416 to 456 (ASSSRSLERQRSPGSFRMETLTPGSPTNTPIEPIDKIDKKK).

The protein belongs to the anion channel-forming bestrophin (TC 1.A.46) family. Calcium-sensitive chloride channel subfamily. As to quaternary structure, forms oligomers.

The protein resides in the cell membrane. Its function is as follows. Forms chloride channels. The sequence is that of Bestrophin homolog 18 (best-18) from Caenorhabditis elegans.